The chain runs to 393 residues: NAD(P)H-quinone oxidoreductase subunit H, chloroplastic (393 aa).

It belongs to the complex I 49 kDa subunit family. In terms of assembly, NDH is composed of at least 16 different subunits, 5 of which are encoded in the nucleus. Interacts with the chaperonin CNP60B4 subunit.

The protein resides in the plastid. The protein localises to the chloroplast thylakoid membrane. The catalysed reaction is a plastoquinone + NADH + (n+1) H(+)(in) = a plastoquinol + NAD(+) + n H(+)(out). It catalyses the reaction a plastoquinone + NADPH + (n+1) H(+)(in) = a plastoquinol + NADP(+) + n H(+)(out). NDH shuttles electrons from NAD(P)H:plastoquinone, via FMN and iron-sulfur (Fe-S) centers, to quinones in the photosynthetic chain and possibly in a chloroplast respiratory chain. The immediate electron acceptor for the enzyme in this species is believed to be plastoquinone. Couples the redox reaction to proton translocation, and thus conserves the redox energy in a proton gradient. In Arabidopsis thaliana (Mouse-ear cress), this protein is NAD(P)H-quinone oxidoreductase subunit H, chloroplastic.